We begin with the raw amino-acid sequence, 657 residues long: MSVDSSSSSTHRRRCVAARLVRLAAAGAAVTVAVGTAAAWAHAGALQHRCIHDAMQARVRQSVARHHTAPGAVSAVGLPYVTLDAAHTAAAADPRPGSAPTVVRAANWSTLRVAVSTEDLTDPAYHCARVGQRVNNHAGAIVTCTAEDILTDEKRDILRKYLIPQALQLHTERLKARQVQGKWKVTGMVDEICGDFKVPQAHITEGFSNTDFVMYVASVPSEEGVLAWATTCQVFSDGHPAVGVINIPAANIASRYDQLVTRVVTHEMAHALGFSEEFFTAARIVAHVSNVRHKTLKVPVVNSSTAVAKAREQYGCGTLEYLEIEDQGGAGSAGSHIKMRNAQDELMAPAAAGGYYTALTMAVFQDLGFYQADFNKAKVMPWGRNAGCAFLSEKCMEQNITKWRAMFCNESEDVMRCPTSRLSLGTCGIRGYRPPLPRYWQYFTNASLGGYSPFMDYCPVVIGYANGSCNQDASSAAEFLAAFNVFSEAARCIDGAFTPKNRTAADGYYAGLCANVRCDTATRTYSVQVRGSMDYVSCTPGLRVELSTVSNAFEEGGCITCPPYVEVCQGNVKGAKDFAGDSDSSSSADDAAGKAAMLRWNDRMVGLATAATVLLGMVLSLMALVVVWLLLVSCPWWCCKLGGPPASVTPACSPETE.

Residues 1–41 (MSVDSSSSSTHRRRCVAARLVRLAAAGAAVTVAVGTAAAWA) form the signal peptide. Positions 42 to 102 (HAGALQHRCI…DPRPGSAPTV (61 aa)) are cleaved as a propeptide — activation peptide. At 44–611 (GALQHRCIHD…DRMVGLATAA (568 aa)) the chain is on the extracellular side. Residue Asn-107 is glycosylated (N-linked (GlcNAc...) asparagine). 2 disulfide bridges follow: Cys-127–Cys-144 and Cys-193–Cys-232. His-266 contacts Zn(2+). Glu-267 is an active-site residue. Zn(2+) is bound at residue His-270. Asn-302 is a glycosylation site (N-linked (GlcNAc...) asparagine). Disulfide bonds link Cys-316-Cys-388, Cys-395-Cys-458, Cys-408-Cys-427, Cys-417-Cys-492, Cys-469-Cys-513, Cys-518-Cys-568, and Cys-538-Cys-561. Zn(2+) is bound at residue His-336. N-linked (GlcNAc...) asparagine glycosylation is found at Asn-399, Asn-409, Asn-445, Asn-466, and Asn-501. Residues 612–632 (TVLLGMVLSLMALVVVWLLLV) traverse the membrane as a helical segment. Topologically, residues 633-657 (SCPWWCCKLGGPPASVTPACSPETE) are cytoplasmic.

This sequence belongs to the peptidase M8 family. Zn(2+) serves as cofactor.

The protein resides in the membrane. The enzyme catalyses Preference for hydrophobic residues at P1 and P1' and basic residues at P2' and P3'. A model nonapeptide is cleaved at -Ala-Tyr-|-Leu-Lys-Lys-.. In terms of biological role, has an integral role during the infection of macrophages in the mammalian host. This is Leishmanolysin (mspC) from Leishmania tropica.